Here is a 344-residue protein sequence, read N- to C-terminus: UDP-N-acetylglucosamine--N-acetylmuramyl-(pentapeptide) pyrophosphoryl-undecaprenol N-acetylglucosamine transferase (344 aa).

Residues 9-11 (TGG), N118, R157, S188, and Q282 each bind UDP-N-acetyl-alpha-D-glucosamine.

Belongs to the glycosyltransferase 28 family. MurG subfamily.

Its subcellular location is the cell inner membrane. It carries out the reaction di-trans,octa-cis-undecaprenyl diphospho-N-acetyl-alpha-D-muramoyl-L-alanyl-D-glutamyl-meso-2,6-diaminopimeloyl-D-alanyl-D-alanine + UDP-N-acetyl-alpha-D-glucosamine = di-trans,octa-cis-undecaprenyl diphospho-[N-acetyl-alpha-D-glucosaminyl-(1-&gt;4)]-N-acetyl-alpha-D-muramoyl-L-alanyl-D-glutamyl-meso-2,6-diaminopimeloyl-D-alanyl-D-alanine + UDP + H(+). Its pathway is cell wall biogenesis; peptidoglycan biosynthesis. Cell wall formation. Catalyzes the transfer of a GlcNAc subunit on undecaprenyl-pyrophosphoryl-MurNAc-pentapeptide (lipid intermediate I) to form undecaprenyl-pyrophosphoryl-MurNAc-(pentapeptide)GlcNAc (lipid intermediate II). This Aquifex aeolicus (strain VF5) protein is UDP-N-acetylglucosamine--N-acetylmuramyl-(pentapeptide) pyrophosphoryl-undecaprenol N-acetylglucosamine transferase.